The sequence spans 90 residues: U7-theraphotoxin-Hhn1g (90 aa).

The signal sequence occupies residues 1–19 (MKTAIFTVVLALAVFAVLS). Residues 20–50 (FGWEANEKALSEEFTELIHEKEAASETEARE) constitute a propeptide that is removed on maturation. 3 disulfide bridges follow: C51-C65, C58-C70, and C64-C81.

This sequence belongs to the neurotoxin 10 (Hwtx-1) family. 13 (Hntx-13) subfamily. In terms of tissue distribution, expressed by the venom gland.

It localises to the secreted. Ion channel inhibitor. In Cyriopagopus hainanus (Chinese bird spider), this protein is U7-theraphotoxin-Hhn1g.